The following is a 580-amino-acid chain: Arrestin domain-containing protein A (580 aa).

N-linked (GlcNAc...) asparagine glycosylation is found at Asn-27, Asn-33, and Asn-60. The disordered stretch occupies residues 31–54; that stretch reads NVNTTSSHHHHHSNSGNAEVSFNG. Disordered regions lie at residues 67 to 86 and 95 to 114; these read ETHS…EISI and MTMS…HKES. The chain crosses the membrane as a helical span at residues 118-138; the sequence is NLSLGGIVGAVVGAVTGGVMI. N-linked (GlcNAc...) asparagine glycans are attached at residues Asn-149, Asn-341, and Asn-342. The FYVE-type zinc-finger motif lies at 468 to 528; the sequence is DEHATACRKC…VCEECYPIAT (61 aa). The Zn(2+) site is built by Cys-474, Cys-477, Cys-490, Cys-493, Cys-498, Cys-501, Cys-520, and Cys-523.

This sequence belongs to the arrestin family.

The protein localises to the membrane. The sequence is that of Arrestin domain-containing protein A (adcA) from Dictyostelium discoideum (Social amoeba).